A 507-amino-acid polypeptide reads, in one-letter code: Branchpoint-bridging protein (507 aa).

A compositionally biased stretch (polar residues) spans 84–93 (DLNPPTSRYR). The interval 84–110 (DLNPPTSRYRSLSPPPVYDSQGKRTNT) is disordered. In terms of domain architecture, KH spans 154–220 (YIPINDYPEI…NMNEPLHCVI (67 aa)). 2 consecutive CCHC-type zinc fingers follow at residues 272–289 (RPCP…ECSS) and 297–314 (VICQ…DCTS). Residues 307–507 (HAARDCTSPL…PPPPPPPPSS (201 aa)) are disordered. The span at 319-336 (FGKRTSDGPEFRETKKLQ) shows a compositional bias: basic and acidic residues. Positions 345–376 (PVGSHPSAPGSGSANSGVAPASLHPPGTMAPP) are enriched in low complexity. Composition is skewed to pro residues over residues 390–412 (TLPP…PVAL) and 440–449 (EGPPAPPQTA). Low complexity predominate over residues 450–469 (PPLRQTAATASSAGSSQSAQ). Residues 484-507 (PGPPAAVLPPPPPPPPPPPPPPSS) show a composition bias toward pro residues.

Belongs to the BBP/SF1 family.

Its subcellular location is the nucleus. Necessary for the splicing of pre-mRNA. Has a role in the recognition of the branch site (5'-UACUAAC-3'), the pyrimidine tract and the 3'-splice site at the 3'-end of introns. This chain is Branchpoint-bridging protein (BBP), found in Eremothecium gossypii (strain ATCC 10895 / CBS 109.51 / FGSC 9923 / NRRL Y-1056) (Yeast).